The following is a 134-amino-acid chain: Ribonuclease VapC1 (134 aa).

The PINc domain maps to 4 to 123; that stretch reads IIDTSIIIAL…LNVKDFKRIQ (120 aa). D6 and D97 together coordinate Mg(2+).

This sequence belongs to the PINc/VapC protein family. The cofactor is Mg(2+).

Its function is as follows. Toxic component of a type II toxin-antitoxin (TA) system. Has ssRNase activity. Upon expression in E.coli inhibits growth in liquid culture; this toxic effect is neutralized by coexpression with cognate antitoxin VapB1. Its RNase activity is partially inhibited in vitro by VapB1. The chain is Ribonuclease VapC1 from Rickettsia felis (strain ATCC VR-1525 / URRWXCal2) (Rickettsia azadi).